We begin with the raw amino-acid sequence, 798 residues long: Protocadherin beta-13 (798 aa).

The first 28 residues, Met1 to Ala28, serve as a signal peptide directing secretion. Residues Ala29–Leu690 lie on the Extracellular side of the membrane. 5 Cadherin domains span residues Val36 to Phe134, Met139 to Phe243, Tyr248 to Val348, Phe353 to Phe451, and Tyr456 to Val561. N-linked (GlcNAc...) asparagine glycans are attached at residues Asn418 and Asn436. Asn567 carries N-linked (GlcNAc...) asparagine glycosylation. One can recognise a Cadherin 6 domain in the interval Gly568–Leu671. The chain crosses the membrane as a helical span at residues Val691–Val711. Topologically, residues Arg712 to Gln798 are cytoplasmic.

The protein localises to the cell membrane. Functionally, potential calcium-dependent cell-adhesion protein. May be involved in the establishment and maintenance of specific neuronal connections in the brain. The polypeptide is Protocadherin beta-13 (PCDHB13) (Homo sapiens (Human)).